The chain runs to 438 residues: GTPase Obg (438 aa).

In terms of domain architecture, Obg spans 6 to 164 (AEFVDRVKIF…RWLELELKIL (159 aa)). The OBG-type G domain occupies 165–335 (ADVGLVGYPN…LLDRVASIVR (171 aa)). Residues 171-178 (GYPNVGKS), 196-200 (FTTLV), 217-220 (DIPG), 287-290 (NKID), and 316-318 (SAV) each bind GTP. Positions 178 and 198 each coordinate Mg(2+). Residues 358–438 (VWRKLPERFE…IGNFEFEYRE (81 aa)) form the OCT domain.

It belongs to the TRAFAC class OBG-HflX-like GTPase superfamily. OBG GTPase family. In terms of assembly, monomer. Mg(2+) serves as cofactor.

It is found in the cytoplasm. Functionally, an essential GTPase which binds GTP, GDP and possibly (p)ppGpp with moderate affinity, with high nucleotide exchange rates and a fairly low GTP hydrolysis rate. Plays a role in control of the cell cycle, stress response, ribosome biogenesis and in those bacteria that undergo differentiation, in morphogenesis control. This is GTPase Obg from Thermotoga neapolitana (strain ATCC 49049 / DSM 4359 / NBRC 107923 / NS-E).